The sequence spans 315 residues: 1-aminocyclopropane-1-carboxylate oxidase 1 (315 aa).

In terms of domain architecture, Fe2OG dioxygenase spans 153-253; that stretch reads PNFGTKVSNY…RMSLASFYNP (101 aa). Fe cation contacts are provided by His177, Asp179, and His234.

It belongs to the iron/ascorbate-dependent oxidoreductase family. Fe cation is required as a cofactor. In terms of tissue distribution, predominantly expressed in the petals and the stigma and style.

The enzyme catalyses 1-aminocyclopropane-1-carboxylate + L-ascorbate + O2 = ethene + L-dehydroascorbate + hydrogen cyanide + CO2 + 2 H2O. It participates in alkene biosynthesis; ethylene biosynthesis via S-adenosyl-L-methionine; ethylene from S-adenosyl-L-methionine: step 2/2. This chain is 1-aminocyclopropane-1-carboxylate oxidase 1 (ACO1), found in Solanum lycopersicum (Tomato).